A 999-amino-acid polypeptide reads, in one-letter code: MASNATFEVEIYGNTTKFENSLKGVNTAMSGLRGEAKNLREALKLDPANTGKMAQLQKNLQTQLGLSRDKATKLKEELSTVDKGTSAGQKKWLQLTRDLGTVETQANRLEGEIKQVEGAISSGSWNIDAKMDTKGVNSGIDGMKSRFSGLREIAVGVFRQIGSSAVSAVGNGLKGWVSDAMDTQKAMISLQNTLKFKGNGQDFDYVSKSMQTLAKDTNANTEDTLKLSTTFIGLGDSAKTAVGKTEALVKANQAFGGTGEQLKGVVQAYGQMSASGKVSAENINQLTDNNTALGSALKSTVMEMNPALKQYGSFASASEKGAISVEMLDKAMQKLGGAGGGAVTTIGDAWDSFNETLSLALLPTLDALTPIISSIIDKMAGWGESAGKALDSIVKYVKELWGALEKNGALSSLSKIWDGLKSTFGSVLSIIGQLIESFAGIDLKTGESAGSVENVSKTIANLAKGLADVIKKIADFAKKFSESKGAIDTLKTSLVALTAGFVAFKIGSGIITAISAFKKLQTAIQAGTGVMGAFNAVMAINPFVALGIAIAAIVAGLVYFFTQTETGKKAWASFVDFLKSAWDGIVSFFSGIGQWFADIWNGAVDGAKGIWQGLVDWFSGIVQGVQNIWNGITTFFTTLWTTVVTGIQTAWAGVTGFFTGLWDGIVNVVTTVFTTISSLVTGAYNWFVTTFQPLISFYKSIFGLVGSVINLAFQLILAIIRGAYQLVIGAWSGISGFFGVIFNAVSSVVSTVFSAIGSFAGSAWNVLVGVWNAVAGFFGGIFNAVKGVVSSVFSAIGSFASSAWGVVSSIWSAVSGFFSGIFNAVSSVVSGVFSALGGFASNAWGAITGIFSGVADFFSGVFDGAKNIVSGVFEAFGNFASNAWNAITGVFNGIGSFFSDIFGGVKNTIDSVLGGVTDTINNIKGSIDWVASKVGGLFKGSMVVGLTDVNLSSSGYGLSTNSVSSDNRTYNTFNVQGGAGQDVSNLARAIRREFELGRA.

This sequence belongs to the skunalikevirus tape measure protein family.

Its subcellular location is the virion. Probable tape measure protein. Serves as a base for tail tube protein polymerization and acts as a template for tail length determination. This is Probable tape measure protein from Lactococcus phage p2 (Lactococcus lactis bacteriophage p2).